The primary structure comprises 537 residues: Multidrug resistance protein Stp (537 aa).

Helical transmembrane passes span 6–26 (LLTL…ALIV), 46–66 (WVVA…ATLA), 77–97 (IGVS…SIAV), 104–124 (AQGL…SAAF), 136–156 (IWTA…GLLV), 163–183 (SIFY…LCYV), 200–220 (LLFI…PQIG), 223–243 (SVQT…FVWL), 262–282 (YALA…MLLL), 300–320 (LMIL…GHLV), 327–347 (VPIL…IFSE), 352–372 (ALVL…LTPI), 397–417 (AIGS…WLSA), and 478–498 (VALL…WRWF).

This sequence belongs to the major facilitator superfamily. EmrB family.

The protein resides in the cell membrane. Its function is as follows. Contributes to spectinomycin and tetracycline resistance. This is Multidrug resistance protein Stp (stp) from Mycobacterium tuberculosis (strain ATCC 25618 / H37Rv).